Reading from the N-terminus, the 213-residue chain is Large ribosomal subunit protein uL3 (213 aa).

It belongs to the universal ribosomal protein uL3 family. As to quaternary structure, part of the 50S ribosomal subunit. Forms a cluster with proteins L14 and L19.

Functionally, one of the primary rRNA binding proteins, it binds directly near the 3'-end of the 23S rRNA, where it nucleates assembly of the 50S subunit. This chain is Large ribosomal subunit protein uL3, found in Petrotoga mobilis (strain DSM 10674 / SJ95).